The chain runs to 428 residues: Histidine--tRNA ligase (428 aa).

It belongs to the class-II aminoacyl-tRNA synthetase family. In terms of assembly, homodimer.

Its subcellular location is the cytoplasm. It carries out the reaction tRNA(His) + L-histidine + ATP = L-histidyl-tRNA(His) + AMP + diphosphate + H(+). The sequence is that of Histidine--tRNA ligase (hisS) from Chlamydia muridarum (strain MoPn / Nigg).